A 107-amino-acid polypeptide reads, in one-letter code: Polyketide synthase CurG (107 aa).

It functions in the pathway antibiotic biosynthesis; curamycin biosynthesis. This chain is Polyketide synthase CurG (curG), found in Streptomyces cyaneus (Streptomyces curacoi).